The primary structure comprises 401 residues: Voltage-gated potassium channel subunit beta-1 (401 aa).

Positions 90, 91, 97, and 119 each coordinate NADP(+). Y124 (proton donor/acceptor) is an active-site residue. Residues N192, S222, R223, Q248, W277, S278, P279, L280, A281, C282, K288, R298, G357, S359, Q363, E366, and N367 each coordinate NADP(+).

Belongs to the shaker potassium channel beta subunit family. Homotetramer. Interaction with tetrameric potassium channel alpha subunits gives rise to a heterooctamer. Identified in potassium channel complexes containing KCNA1, KCNA2, KCNA4, KCNA5, KCNA6, KCNAB1 and KCNAB2. Part of a complex containing KCNA1, KCNA4 and LGI1; interaction with LGI1 inhibits down-regulation of KCNA1 channel activity. Interacts with the dimer formed by GNB1 and GNG2; this enhances KCNA1 binding. Interacts with SQSTM. Detected in brain, in hippocampus and striatum (at protein level). Predominantly expressed in brain. No expression found in heart, skeletal muscle or kidney. In the late embryonic and early neonatal brain, highly expressed in hippocampus, cerebral cortex, caudate putamen, colliculus and cerebellum.

It is found in the cytoplasm. Its subcellular location is the membrane. The protein localises to the cell membrane. The enzyme catalyses a primary alcohol + NADP(+) = an aldehyde + NADPH + H(+). It carries out the reaction a secondary alcohol + NADP(+) = a ketone + NADPH + H(+). Regulatory subunit of the voltage-gated potassium (Kv) Shaker channels composed of pore-forming and potassium-conducting alpha subunits and of regulatory beta subunits. The beta-1/KCNAB1 cytoplasmic subunit mediates closure of delayed rectifier potassium channels by physically obstructing the pore via its N-terminal domain and increases the speed of channel closure for other family members. Promotes the inactivation of KCNA1, KCNA2, KCNA4, KCNA5 and KCNA6 alpha subunit-containing channels. Displays nicotinamide adenine dinucleotide phosphate (NADPH)-dependent aldoketoreductase activity by catalyzing the NADPH-dependent reduction of a variety of endogenous aldehydes and ketones. The binding of NADPH is required for efficient down-regulation of potassium channel activity. Oxidation of the bound NADPH restrains N-terminal domain from blocking the channel, thereby decreasing N-type inactivation of potassium channel activity. This Mus musculus (Mouse) protein is Voltage-gated potassium channel subunit beta-1.